The following is a 384-amino-acid chain: D-alanine--D-alanine ligase (384 aa).

The ATP-grasp domain maps to 167 to 374; sequence KKLFAAEGLP…YPTLLATMVD (208 aa). 195–250 lines the ATP pocket; the sequence is CERLSLPVFVKPARGGSSIGISRVSSWGQLPSAIAYARRHDPKVIVEAAVNGRELE. Residues aspartate 329, glutamate 341, and asparagine 343 each contribute to the Mg(2+) site.

Belongs to the D-alanine--D-alanine ligase family. Mg(2+) is required as a cofactor. The cofactor is Mn(2+).

The protein localises to the cytoplasm. It carries out the reaction 2 D-alanine + ATP = D-alanyl-D-alanine + ADP + phosphate + H(+). Its pathway is cell wall biogenesis; peptidoglycan biosynthesis. Cell wall formation. The sequence is that of D-alanine--D-alanine ligase from Mycobacterium leprae (strain TN).